We begin with the raw amino-acid sequence, 464 residues long: Glutamate--tRNA ligase 1 (464 aa).

Residues 10 to 20 (PSPTGYLHIGG) carry the 'HIGH' region motif. Positions 238–242 (KLSKR) match the 'KMSKS' region motif. K241 serves as a coordination point for ATP.

Belongs to the class-I aminoacyl-tRNA synthetase family. Glutamate--tRNA ligase type 1 subfamily. Monomer.

It is found in the cytoplasm. The catalysed reaction is tRNA(Glu) + L-glutamate + ATP = L-glutamyl-tRNA(Glu) + AMP + diphosphate. Functionally, catalyzes the attachment of glutamate to tRNA(Glu) in a two-step reaction: glutamate is first activated by ATP to form Glu-AMP and then transferred to the acceptor end of tRNA(Glu). This Helicobacter hepaticus (strain ATCC 51449 / 3B1) protein is Glutamate--tRNA ligase 1.